A 522-amino-acid polypeptide reads, in one-letter code: MVFVELSIFVAFIGLLLYKWSVYTFGYFSKRGVAHEKPIPLLGNIPWSVLMGKESYIKHSIDLHLRLKQHKVYGVFNLRDPLYYLSDPELIRQVGIKNFDTFTNHRKGITEGFNDTSVISKSLLSLRDRRWKQMRSTLTPTFTSLKIRQMFELIHFCNVEAVDFVQRQLDAGTSELELKDFFTRYTNDVIATAAFGIQVNSFKDPNNEFFSIGQRISEFTFWGGLKVMLYILMPKLMKALRVPVMDMNNVDYFKKLVFGAMKYRKEQSIVRPDMIHLLMEAQRQFKAEQEGSAESAAQQDKAEFNDDDLLAQCLLFFSAGFETVATCLSFTSYELMMNPEVQEKLLAEILAVKEQLGEKPLDYDTLMGMKYLNCVVSESLRKWPPAFIVDRMCGSDFQLKDEEGEVVVNLREDDLVHINVGALHHDPDNFPEPEQFRPERFDEEHKHEIRQFTYLPFGVGQRSCIGNRLALMEVKSLIFQLVLRYHLKPTDRTPADMMSSISGFRLLPRELFWCKLESRGPA.

Cys-464 is a heme binding site.

It belongs to the cytochrome P450 family. The cofactor is heme.

The protein resides in the endoplasmic reticulum membrane. The protein localises to the microsome membrane. Its function is as follows. May be involved in the metabolism of insect hormones and in the breakdown of synthetic insecticides. The polypeptide is Cytochrome P450 9c1 (Cyp9c1) (Drosophila melanogaster (Fruit fly)).